Here is a 347-residue protein sequence, read N- to C-terminus: Eukaryotic translation initiation factor 3 subunit H (347 aa).

Residues valine 6–threonine 149 form the MPN domain. Positions serine 136–glycine 155 are disordered. A compositionally biased stretch (polar residues) spans threonine 138–glycine 155.

This sequence belongs to the eIF-3 subunit H family. Component of the eukaryotic translation initiation factor 3 (eIF-3) complex.

It localises to the cytoplasm. In terms of biological role, component of the eukaryotic translation initiation factor 3 (eIF-3) complex, which is involved in protein synthesis of a specialized repertoire of mRNAs and, together with other initiation factors, stimulates binding of mRNA and methionyl-tRNAi to the 40S ribosome. The eIF-3 complex specifically targets and initiates translation of a subset of mRNAs involved in cell proliferation. The polypeptide is Eukaryotic translation initiation factor 3 subunit H (Yarrowia lipolytica (strain CLIB 122 / E 150) (Yeast)).